A 205-amino-acid polypeptide reads, in one-letter code: Peptidyl-tRNA hydrolase (205 aa).

Tyr-18 serves as a coordination point for tRNA. His-23 serves as the catalytic Proton acceptor. Residues Tyr-69, Asn-71, and Asn-117 each coordinate tRNA.

It belongs to the PTH family. Monomer.

Its subcellular location is the cytoplasm. The enzyme catalyses an N-acyl-L-alpha-aminoacyl-tRNA + H2O = an N-acyl-L-amino acid + a tRNA + H(+). Hydrolyzes ribosome-free peptidyl-tRNAs (with 1 or more amino acids incorporated), which drop off the ribosome during protein synthesis, or as a result of ribosome stalling. Functionally, catalyzes the release of premature peptidyl moieties from peptidyl-tRNA molecules trapped in stalled 50S ribosomal subunits, and thus maintains levels of free tRNAs and 50S ribosomes. The sequence is that of Peptidyl-tRNA hydrolase from Synechococcus sp. (strain CC9605).